The chain runs to 205 residues: Variable small protein 11 (205 aa).

A signal peptide spans 1 to 18 (MRKRISAIIMTLFMVFMS). Cys19 carries N-palmitoyl cysteine lipidation. Cys19 carries the S-diacylglycerol cysteine lipid modification.

Belongs to the variable small protein (Vsp) family.

Its subcellular location is the cell outer membrane. In terms of biological role, the Vlp and Vsp proteins are antigenically distinct proteins, only one vlp or vsp gene is transcriptionally active at any one time. Switching between these genes is a mechanism of host immune response evasion. This chain is Variable small protein 11, found in Borrelia hermsii.